A 430-amino-acid polypeptide reads, in one-letter code: Protein arginine methyltransferase NDUFAF7, mitochondrial (430 aa).

Residues 1–31 constitute a mitochondrion transit peptide; that stretch reads MSGLARLRKTAFLMVSASANCRIQRYQSSRT.

This sequence belongs to the NDUFAF7 family.

It is found in the mitochondrion. The catalysed reaction is L-arginyl-[protein] + 2 S-adenosyl-L-methionine = N(omega),N(omega)'-dimethyl-L-arginyl-[protein] + 2 S-adenosyl-L-homocysteine + 2 H(+). In terms of biological role, arginine methyltransferase involved in the assembly or stability of mitochondrial NADH:ubiquinone oxidoreductase complex (complex I). Acts by mediating symmetric dimethylation of 'Arg-118' of ndufs2 after it assembles into the complex I, stabilizing the early intermediate complex. The sequence is that of Protein arginine methyltransferase NDUFAF7, mitochondrial from Xenopus tropicalis (Western clawed frog).